The chain runs to 316 residues: PDZ and LIM domain protein 3 (316 aa).

Residues 1–84 (MPQNVVLPGP…QLCLKIDRAE (84 aa)) form the PDZ domain. Residues Ser-18 and Ser-93 each carry the phosphoserine modification. Arg-164 is subject to Omega-N-methylarginine. The LIM zinc-binding domain occupies 244–303 (PLCDKCGSGIVGAVVKARDKYRHPECFVCADCNLNLKQKGYFFVEGELYCETHARARTRP).

In terms of assembly, interacts with ACTN2. Forms a heterodimer with PDLIM4 (via LIM domain).

It is found in the cytoplasm. It localises to the myofibril. The protein localises to the sarcomere. Its subcellular location is the z line. In terms of biological role, may play a role in the organization of actin filament arrays within muscle cells. The sequence is that of PDZ and LIM domain protein 3 (Pdlim3) from Mus musculus (Mouse).